A 36-amino-acid polypeptide reads, in one-letter code: GLGRPSRECIEGSEPCEVFRPYTCCSGHCIIFVCAR.

Residues 1 to 7 (GLGRPSR) constitute a propeptide that is removed on maturation. Disulfide bonds link Cys9-Cys25, Cys16-Cys29, and Cys24-Cys34.

Belongs to the conotoxin O1 superfamily. Expressed by the venom duct.

The protein resides in the secreted. Probable neurotoxin with unknown target. Possibly targets ion channels. This chain is Conotoxin Cal6.1h, found in Californiconus californicus (California cone).